A 154-amino-acid chain; its full sequence is Transcriptional repressor NrdR (154 aa).

The segment at 3-34 is a zinc-finger region; it reads CPFCRHPDSRVIDSRETDEGQAIRRRRSCPEC. Residues 46–136 form the ATP-cone domain; that stretch reads LAVVKRSGVT…VYRSFESADD (91 aa).

The protein belongs to the NrdR family. Requires Zn(2+) as cofactor.

In terms of biological role, negatively regulates transcription of bacterial ribonucleotide reductase nrd genes and operons by binding to NrdR-boxes. In Mycobacterium avium (strain 104), this protein is Transcriptional repressor NrdR.